The primary structure comprises 178 residues: Peptide deformylase (178 aa).

Positions 102 and 144 each coordinate Fe cation. Glu145 is a catalytic residue. His148 provides a ligand contact to Fe cation.

The protein belongs to the polypeptide deformylase family. Requires Fe(2+) as cofactor.

The catalysed reaction is N-terminal N-formyl-L-methionyl-[peptide] + H2O = N-terminal L-methionyl-[peptide] + formate. In terms of biological role, removes the formyl group from the N-terminal Met of newly synthesized proteins. Requires at least a dipeptide for an efficient rate of reaction. N-terminal L-methionine is a prerequisite for activity but the enzyme has broad specificity at other positions. The sequence is that of Peptide deformylase from Leptospira interrogans serogroup Icterohaemorrhagiae serovar copenhageni (strain Fiocruz L1-130).